The primary structure comprises 111 residues: uncharacterized protein (111 aa).

2 helical membrane passes run 7-29 (LYSS…RALY) and 49-71 (PSLL…SINL).

The protein resides in the membrane. This is an uncharacterized protein from Saccharomyces cerevisiae (strain ATCC 204508 / S288c) (Baker's yeast).